The sequence spans 73 residues: uncharacterized protein (73 aa).

This is an uncharacterized protein from Haemophilus influenzae (strain ATCC 51907 / DSM 11121 / KW20 / Rd).